Consider the following 151-residue polypeptide: Large ribosomal subunit protein bL9 (151 aa).

This sequence belongs to the bacterial ribosomal protein bL9 family.

Its function is as follows. Binds to the 23S rRNA. The polypeptide is Large ribosomal subunit protein bL9 (Rhodococcus opacus (strain B4)).